A 225-amino-acid chain; its full sequence is Glutathione S-transferase Mu 3 (225 aa).

In terms of domain architecture, GST N-terminal spans 5–92; the sequence is SSMVLGYWDI…YIARKHNMCG (88 aa). Residues 11–12, 50–54, and 63–64 each bind glutathione; these read YW, WLDVK, and NL. Lysine 54 is covalently cross-linked (Glycyl lysine isopeptide (Lys-Gly) (interchain with G-Cter in SUMO2)). A Glycyl lysine isopeptide (Lys-Gly) (interchain with G-Cter in SUMO2) cross-link involves residue lysine 73. 76–77 lines the glutathione pocket; it reads QS. The GST C-terminal domain occupies 94 to 212; the sequence is TEEEKIRVDI…QSDQFCKMPI (119 aa). Residue tyrosine 120 coordinates substrate.

It belongs to the GST superfamily. Mu family. Homodimer. The N-terminus is blocked. As to expression, testis and brain.

The protein localises to the cytoplasm. It catalyses the reaction RX + glutathione = an S-substituted glutathione + a halide anion + H(+). Its function is as follows. Conjugation of reduced glutathione to a wide number of exogenous and endogenous hydrophobic electrophiles. May govern uptake and detoxification of both endogenous compounds and xenobiotics at the testis and brain blood barriers. The protein is Glutathione S-transferase Mu 3 (GSTM3) of Homo sapiens (Human).